We begin with the raw amino-acid sequence, 77 residues long: Ras-related C3 botulinum toxin substrate 1 (77 aa).

Residue 22–24 (KLD) coordinates GTP. Residue Lys53 forms a Glycyl lysine isopeptide (Lys-Gly) (interchain with G-Cter in ubiquitin) linkage. Residue 65 to 66 (AL) participates in GTP binding.

This sequence belongs to the small GTPase superfamily. Rho family. In terms of assembly, interacts with NISCH. Interacts with PIP5K1A. Interacts with the GTP-bound form of RAB7A. Interacts with SRGAP2. Interacts with CYFIP1/SRA-1. Interacts with PLXNB3. Interacts with ARHGDIA; the interaction is induced by SEMA5A, mediated through PLXNB3 and inactivates and stabilizes RAC1. Interacts (GTP-bound form preferentially) with PKN2 (via the REM repeats); the interaction stimulates autophosphorylation and phosphorylation of PKN2. Interacts with the GEF proteins PREX1, RASGRF2, FARP1, FARP2, DOCK1, DOCK2 and DOCK7, which promote the exchange between GDP and GTP, and therefore activate it. Interacts with PARD6A, PARD6B and PARD6G in a GTP-dependent manner. Part of a quaternary complex containing PARD3, some PARD6 protein (PARD6A, PARD6B or PARD6G) and some atypical PKC protein (PRKCI or PRKCZ), which plays a central role in epithelial cell polarization. Found in a trimeric complex composed of DOCK1 and ELMO1, which plays a central role in phagocytosis of apoptotic cells. Interacts with RALBP1 via its effector domain. Interacts with PLXNB1. Part of a complex with MAP2K3, MAP3K3, CCM2 and DEF6. Interacts with BAIAP2, BAIAP2L1 and DEF6. Interacts with Y.pseudotuberculosis YPKA and PLCB2. Interacts with NOXA1. Interacts with ARHGEF2. Interacts with TBC1D2. Interacts with UNKL. Interacts with USP6. Interacts with SPATA13. Interacts with ARHGEF16; mediates activation of RAC1 by EPHA2. Interacts with ITGB4. Interacts with S100A8 and calprotectin (S100A8/9). Interacts with PACSIN2. Interacts (when active) with PPP5C (via TPR repeats); activates PPP5C phosphatase activity and translocates PPP5C to the cell membrane. Interacts with RAPH1 (via Ras associating and PH domains). Interacts with MTSS2 (via IMD domain); this interaction may be important to potentiate PDGF-induced RAC1 activation. Interacts with PAK2. Interacts (GTP-bound form) with SH3RF1 and SH3RF3. Found in a complex with SH3RF1, MAPK8IP1/JIP1, MAP3K11/MLK3, MAP2K7/MKK7 and MAPK8/JNK1. Interacts (both active GTP- or inactive GDP-bound forms) with SH3RF2. Interacts (GTP-bound form preferentially) with CYRIB. Interacts with DOCK4 (via DOCKER domain); functions as a guanine nucleotide exchange factor (GEF) for RAC1. Interacts with GARRE1. Interacts with RAP1GDS1. May interact with ARHGAP36. Interacts with DSG3; the interaction is required for DSG3 translocation to cell-cell junctions, organization of cortical F-actin bundles and actin anchoring at cell-cell junctions. Component of the phagocyte NADPH oxidase complex composed of an obligatory core heterodimer formed by the membrane proteins CYBA and CYBB and the cytosolic regulatory subunits NCF1/p47-phox, NCF2/p67-phox, NCF4/p40-phox and the small GTPase RAC1 or RAC2. Interacts with NCF2. Post-translationally, the N-terminus is blocked. GTP-bound active form is ubiquitinated by HACE1, leading to its degradation by the proteasome.

The protein localises to the cytoplasm. Its subcellular location is the membrane. The protein resides in the melanosome. It is found in the cell projection. It localises to the lamellipodium. The protein localises to the dendrite. Its subcellular location is the synapse. The protein resides in the nucleus. It carries out the reaction GTP + H2O = GDP + phosphate + H(+). With respect to regulation, regulated by guanine nucleotide exchange factors (GEFs) which promote the exchange of bound GDP for free GTP, GTPase activating proteins (GAPs) which increase the GTP hydrolysis activity, and GDP dissociation inhibitors which inhibit the dissociation of the nucleotide from the GTPase. GTP hydrolysis is stimulated by ARHGAP30. Its function is as follows. Plasma membrane-associated small GTPase which cycles between active GTP-bound and inactive GDP-bound states. In its active state, binds to a variety of effector proteins to regulate cellular responses such as secretory processes, phagocytosis of apoptotic cells, epithelial cell polarization, neurons adhesion, migration and differentiation, and growth-factor induced formation of membrane ruffles. Rac1 p21/rho GDI heterodimer is the active component of the cytosolic factor sigma 1, which is involved in stimulation of the NADPH oxidase activity in macrophages. Essential for the SPATA13-mediated regulation of cell migration and adhesion assembly and disassembly. Stimulates PKN2 kinase activity. In concert with RAB7A, plays a role in regulating the formation of RBs (ruffled borders) in osteoclasts. In podocytes, promotes nuclear shuttling of NR3C2; this modulation is required for a proper kidney functioning. Required for atypical chemokine receptor ACKR2-induced LIMK1-PAK1-dependent phosphorylation of cofilin (CFL1) and for up-regulation of ACKR2 from endosomal compartment to cell membrane, increasing its efficiency in chemokine uptake and degradation. In neurons, is involved in dendritic spine formation and synaptic plasticity. In hippocampal neurons, involved in spine morphogenesis and synapse formation, through local activation at synapses by guanine nucleotide exchange factors (GEFs), such as ARHGEF6/ARHGEF7/PIX. In synapses, seems to mediate the regulation of F-actin cluster formation performed by SHANK3. In neurons, plays a crucial role in regulating GABA(A) receptor synaptic stability and hence GABAergic inhibitory synaptic transmission through its role in PAK1 activation and eventually F-actin stabilization. Required for DSG3 translocation to cell-cell junctions, DSG3-mediated organization of cortical F-actin bundles and anchoring of actin at cell junctions; via interaction with DSG3. Subunit of the phagocyte NADPH oxidase complex that mediates the transfer of electrons from cytosolic NADPH to O2 to produce the superoxide anion (O2(-)). This chain is Ras-related C3 botulinum toxin substrate 1, found in Cavia porcellus (Guinea pig).